Reading from the N-terminus, the 96-residue chain is MHVTLVEINVHDDKVEQFIDVFRQNHLGSIKEPGNLRFDVLQDPQVPTRFYIYEAYVDEQAVAFHKTTPHYKTCVEQLEPLMTGPRTKKVFMGLMP.

Residues 2-91 (HVTLVEINVH…MTGPRTKKVF (90 aa)) enclose the ABM domain.

This sequence belongs to the LsrG family. In terms of assembly, homodimer.

It localises to the cytoplasm. It catalyses the reaction (2S)-2-hydroxy-3,4-dioxopentyl phosphate = 3-hydroxy-2,4-dioxopentyl phosphate. Involved in the degradation of phospho-AI-2, thereby terminating induction of the lsr operon and closing the AI-2 signaling cycle. Catalyzes the conversion of (4S)-4-hydroxy-5-phosphonooxypentane-2,3-dione (P-DPD) to 3-hydroxy-5-phosphonooxypentane-2,4-dione (P-HPD). This chain is (4S)-4-hydroxy-5-phosphonooxypentane-2,3-dione isomerase, found in Salmonella choleraesuis (strain SC-B67).